We begin with the raw amino-acid sequence, 1478 residues long: Zinc finger protein 518A (1478 aa).

C2H2-type zinc fingers lie at residues 152-174, 209-231, 236-258, and 264-287; these read FPCE…RKTH, FQCE…IHRH, YKCG…LRVH, and FTCH…ITLH. The interval 355-394 is disordered; it reads TQTKSEDQSQEQLNEEKGGRQHCEDGDKPIESGSEKATVL. K358 participates in a covalent cross-link: Glycyl lysine isopeptide (Lys-Gly) (interchain with G-Cter in SUMO2). The segment covering 368-388 has biased composition (basic and acidic residues); sequence NEEKGGRQHCEDGDKPIESGS. Glycyl lysine isopeptide (Lys-Gly) (interchain with G-Cter in SUMO2) cross-links involve residues K390 and K428. The segment at 464 to 484 is disordered; it reads PSPALQPNTEKESTANLPPQA. K518 is covalently cross-linked (Glycyl lysine isopeptide (Lys-Gly) (interchain with G-Cter in SUMO2)). Residue S652 is modified to Phosphoserine. The tract at residues 656 to 694 is disordered; that stretch reads VCENLQRESSNKTVTQQSTSDSDTTSPLRKESSNSDSLL. Residues 670–681 show a composition bias toward low complexity; it reads TQQSTSDSDTTS. Glycyl lysine isopeptide (Lys-Gly) (interchain with G-Cter in SUMO2) cross-links involve residues K707, K792, K882, K895, K987, K1008, K1041, K1055, K1078, K1180, and K1441. A C2H2-type 5 zinc finger spans residues 1444 to 1466; sequence FNCWFCGRVFDNQDVWAGHGQRH.

Belongs to the krueppel C2H2-type zinc-finger protein family.

The protein localises to the nucleus. Its function is as follows. Through its association with the EHMT1-EHMT2/G9A and PRC2/EED-EZH2 histone methyltransferase complexes may function in gene silencing, regulating repressive post-translational methylation of histone tails at promoters of target genes. This chain is Zinc finger protein 518A (Znf518a), found in Rattus norvegicus (Rat).